Here is a 281-residue protein sequence, read N- to C-terminus: Large ribosomal subunit protein mL46 (281 aa).

Residues 1 to 19 (MKVNLMLKRGLATATATAS) constitute a mitochondrion transit peptide. Positions 106–118 (RERSTKQEVKLSD) are enriched in basic and acidic residues. The disordered stretch occupies residues 106–141 (RERSTKQEVKLSDDSTVAFSNNQKEQSKDDVNRPVI). Polar residues predominate over residues 119-129 (DSTVAFSNNQK).

This sequence belongs to the mitochondrion-specific ribosomal protein mL46 family. As to quaternary structure, component of the mitochondrial large ribosomal subunit (mt-LSU). Mature yeast 74S mitochondrial ribosomes consist of a small (37S) and a large (54S) subunit. The 37S small subunit contains a 15S ribosomal RNA (15S mt-rRNA) and 34 different proteins. The 54S large subunit contains a 21S rRNA (21S mt-rRNA) and 46 different proteins.

Its subcellular location is the mitochondrion. Its function is as follows. Component of the mitochondrial ribosome (mitoribosome), a dedicated translation machinery responsible for the synthesis of mitochondrial genome-encoded proteins, including at least some of the essential transmembrane subunits of the mitochondrial respiratory chain. The mitoribosomes are attached to the mitochondrial inner membrane and translation products are cotranslationally integrated into the membrane. The sequence is that of Large ribosomal subunit protein mL46 (MRPL17) from Saccharomyces cerevisiae (strain ATCC 204508 / S288c) (Baker's yeast).